The primary structure comprises 425 residues: Histone-binding protein RBBP7 (425 aa).

An N-acetylalanine modification is found at alanine 2. Serine 3 carries the post-translational modification Phosphoserine. N6-acetyllysine; alternate is present on lysine 4. A Glycyl lysine isopeptide (Lys-Gly) (interchain with G-Cter in SUMO2); alternate cross-link involves residue lysine 4. Lysine 4 participates in a covalent cross-link: Glycyl lysine isopeptide (Lys-Gly) (interchain with G-Cter in ubiquitin); alternate. Phosphothreonine is present on threonine 10. WD repeat units lie at residues 47 to 122 (QWLP…KINH), 128 to 173 (RARY…LRLR), 181 to 217 (GLSW…KIVD), 228 to 269 (VVED…HLVD), 275 to 312 (VNCL…LHTF), 318 to 369 (EIFQ…LFIH), and 376 to 403 (ISDF…IWQM). Serine 95 carries the phosphoserine modification. Lysine 101 participates in a covalent cross-link: Glycyl lysine isopeptide (Lys-Gly) (interchain with G-Cter in SUMO2). At lysine 119 the chain carries N6-acetyllysine. Lysine 155 participates in a covalent cross-link: Glycyl lysine isopeptide (Lys-Gly) (interchain with G-Cter in SUMO2). The residue at position 159 (lysine 159) is an N6-acetyllysine; alternate. A Glycyl lysine isopeptide (Lys-Gly) (interchain with G-Cter in SUMO2); alternate cross-link involves residue lysine 159. At serine 354 the chain carries Phosphoserine.

Belongs to the WD repeat RBAP46/RBAP48/MSI1 family. Binds directly to helix 1 of the histone fold of histone H4, a region that is not accessible when H4 is in chromatin. Subunit of the type B histone acetyltransferase (HAT) complex, composed of RBBP7 and HAT1. Subunit of the core histone deacetylase (HDAC) complex, which is composed of HDAC1, HDAC2, RBBP4 and RBBP7. The core HDAC complex associates with SIN3A, ARID4B/SAP180, SAP18, SAP30, SAP130, SUDS3/SAP45 and possibly ARID4A/RBP1 and ING1 to form the SIN3 HDAC complex. Component of the nucleosome remodeling and deacetylase (NuRD) repressor complex, composed of core proteins MTA1, MTA2, MTA3, RBBP4, RBBP7, HDAC1, HDAC2, MBD2, MBD3, and peripherally associated proteins CDK2AP1, CDK2AP2, GATAD2A, GATAD2B, CHD3, CHD4 and CHD5. The exact stoichiometry of the NuRD complex is unknown, and some subunits such as MBD2 and MBD3, GATAD2A and GATAD2B, and CHD3, CHD4 and CHD5 define mutually exclusive NuRD complexes. The NuRD complex may interact with MBD3L1. The NuRD complex may interact with MBD3L2. Subunit of the PRC2/EED-EZH2 complex, which is composed of at least EED, EZH2, RBBP4, RBBP7 and SUZ12. The PRC2/EED-EZH2 complex may also associate with HDAC1. Component of the NURF-1 ISWI chromatin remodeling complex (also called the nucleosome-remodeling factor (NURF) complex) at least composed of SMARCA1, BPTF, RBBP4 and RBBP7. Within the complex interacts with SMARCA1. Component of the BPFT-SMARCA1 complex at least composed of SMARCA1, BPFT, RBBP4 and RBBP7; the complex is catalytically inactive and does not remodel chromatin. Within the complex interacts with SMARCA1. Interacts with BRCA1. Interacts with CDK2AP1. Interacts with CENPA. Interacts with CHD3. Interacts with CHD4. Interacts with CREBBP, and this interaction may be enhanced by the binding of phosphorylated CREB1 to CREBBP. Interacts with HDAC7. Interacts with MTA1. Interacts with PWWP2B. Interacts with RB1 (via viral protein-binding domain). Interacts with SUV39H1.

It localises to the nucleus. Core histone-binding subunit that may target chromatin remodeling factors, histone acetyltransferases and histone deacetylases to their histone substrates in a manner that is regulated by nucleosomal DNA. Component of several complexes which regulate chromatin metabolism. These include the type B histone acetyltransferase (HAT) complex, which is required for chromatin assembly following DNA replication; the core histone deacetylase (HDAC) complex, which promotes histone deacetylation and consequent transcriptional repression; the nucleosome remodeling and histone deacetylase complex (the NuRD complex), which promotes transcriptional repression by histone deacetylation and nucleosome remodeling; and the PRC2/EED-EZH2 complex, which promotes repression of homeotic genes during development; and the NURF (nucleosome remodeling factor) complex. This is Histone-binding protein RBBP7 (RBBP7) from Bos taurus (Bovine).